A 111-amino-acid polypeptide reads, in one-letter code: Cytochrome c6 (111 aa).

A signal peptide spans 1-25 (MKKIFSLVLLGIALFTFAFSSPALA). Heme c contacts are provided by cysteine 39, cysteine 42, histidine 43, and methionine 83.

This sequence belongs to the cytochrome c family. PetJ subfamily. Monomer. In terms of processing, binds 1 heme c group covalently per subunit.

It is found in the cellular thylakoid lumen. Functionally, functions as an electron carrier between membrane-bound cytochrome b6-f and photosystem I in oxygenic photosynthesis. The sequence is that of Cytochrome c6 (petJ) from Nostoc sp. (strain PCC 7120 / SAG 25.82 / UTEX 2576).